Consider the following 224-residue polypeptide: DNA mismatch repair protein MutH (224 aa).

Belongs to the MutH family.

It is found in the cytoplasm. Its function is as follows. Sequence-specific endonuclease that cleaves unmethylated GATC sequences. It is involved in DNA mismatch repair. In Histophilus somni (strain 129Pt) (Haemophilus somnus), this protein is DNA mismatch repair protein MutH.